The sequence spans 152 residues: Phospholipase A2 (152 aa).

The signal sequence occupies residues 1–20 (MAACHRILLLLSVAVASGAA). 8 disulfides stabilise this stretch: cysteine 39/cysteine 96, cysteine 53/cysteine 142, cysteine 55/cysteine 70, cysteine 69/cysteine 124, cysteine 75/cysteine 149, cysteine 76/cysteine 117, cysteine 85/cysteine 110, and cysteine 103/cysteine 115. Ca(2+) contacts are provided by glycine 56 and glycine 58. Histidine 73 is a catalytic residue. Aspartate 74 provides a ligand contact to Ca(2+). Residue aspartate 118 is part of the active site.

It belongs to the phospholipase A2 family. As to expression, expressed by the venom gland. Heavily expressed in the venom gland transcriptome.

The protein localises to the secreted. The enzyme catalyses a 1,2-diacyl-sn-glycero-3-phosphocholine + H2O = a 1-acyl-sn-glycero-3-phosphocholine + a fatty acid + H(+). In terms of biological role, PA2 catalyzes the calcium-dependent hydrolysis of the 2-acyl groups in 3-sn-phosphoglycerides. This Meiacanthus atrodorsalis (Forktail blenny) protein is Phospholipase A2.